Reading from the N-terminus, the 485-residue chain is MEKSKNIWSLILTEIKKELSEEEFYVWFENLCFLESVGDNIKISTPNLFHKNQIEKRFTKKIKEILTNNGYDNVTIVFTNQSPKTYSSKEESEKTTFNETFPTLDKLKGTTLSKEPLQSIKDRIKMYIKKEEEPKNFKNPFLKKRYTFENFIIGPNNKLAYNASLSISKNPGTKYNPCLIYGGVGLGKTHLLQSIGNKTEELHNNLKILYVTAENFLNEFVESIKTHETKKFKKKYRYLDMLLIDDIHDLQKKEGIQEELFHTFNALYEDNKQLVFTCDRPPSELTNFTDRLKSRFTRGLNVDISKPNFELRVAIIEKKAEEDGIKVPKNILNLVAQKVTTNVRDLEAAVTKLKAYIDLDNIEIDIDIVEKIIKEIIIYEKETTNEPSNKINIENIKKILLRELKIAHKDIEGHSKKPEITKARHIYAYLLRNFTELSTIEIGKIIGGKTHSTVLYSINKIDRDRNKDKEINNLITELMNKIKKN.

Residues methionine 1 to valine 74 form a domain I, interacts with DnaA modulators region. Residues valine 74–proline 140 form a domain II region. The tract at residues phenylalanine 141–isoleucine 357 is domain III, AAA+ region. Residues glycine 185, glycine 187, lysine 188, and threonine 189 each contribute to the ATP site. Positions aspartate 358–asparagine 485 are domain IV, binds dsDNA.

This sequence belongs to the DnaA family. Oligomerizes as a right-handed, spiral filament on DNA at oriC.

It is found in the cytoplasm. In terms of biological role, plays an essential role in the initiation and regulation of chromosomal replication. ATP-DnaA binds to the origin of replication (oriC) to initiate formation of the DNA replication initiation complex once per cell cycle. Binds the DnaA box (a 9 base pair repeat at the origin) and separates the double-stranded (ds)DNA. Forms a right-handed helical filament on oriC DNA; dsDNA binds to the exterior of the filament while single-stranded (ss)DNA is stabiized in the filament's interior. The ATP-DnaA-oriC complex binds and stabilizes one strand of the AT-rich DNA unwinding element (DUE), permitting loading of DNA polymerase. After initiation quickly degrades to an ADP-DnaA complex that is not apt for DNA replication. Binds acidic phospholipids. This chain is Chromosomal replication initiator protein DnaA, found in Borreliella afzelii (strain PKo) (Borrelia afzelii).